A 505-amino-acid polypeptide reads, in one-letter code: Phosphoglycerate kinase A (505 aa).

(2R)-3-phosphoglycerate contacts are provided by V32, D33, F34, N35, R48, S70, H71, G73, R74, R224, H260, and R261. Residues G306 and A307 each contribute to the ADP site. Residue G306 participates in CDP binding. AMP is bound by residues A307 and K308. A307 contributes to the ATP binding site. A307 is a binding site for Mg(2+). A (2R)-3-phosphoglycerate-binding site is contributed by K308. CDP is bound at residue E311. A Mg(2+)-binding site is contributed by E311. K312 and G330 together coordinate ADP. K312 provides a ligand contact to AMP. Residue K312 participates in ATP binding. G330 contributes to the CDP binding site. AMP is bound by residues A331 and A403. Residues A331 and A403 each coordinate ATP. ADP is bound by residues A403 and N427. Positions 428 and 433 each coordinate CDP. Positions 433, 434, 466, and 467 each coordinate ADP. E434 serves as a coordination point for AMP. ATP-binding residues include E434, E466, and S467. E466 serves as a coordination point for Mg(2+).

It belongs to the phosphoglycerate kinase family. As to quaternary structure, monomer. Requires Mg(2+) as cofactor.

It carries out the reaction (2R)-3-phosphoglycerate + ATP = (2R)-3-phospho-glyceroyl phosphate + ADP. The protein operates within carbohydrate degradation; glycolysis; pyruvate from D-glyceraldehyde 3-phosphate: step 2/5. This chain is Phosphoglycerate kinase A, found in Trypanosoma brucei brucei.